The following is a 424-amino-acid chain: Zinc metalloproteinase-disintegrin-like brevilysin H2b (424 aa).

Q1 is subject to Pyrrolidone carboxylic acid. The region spanning 9-207 is the Peptidase M12B domain; sequence RYVKLAIVAD…YKPQCILNEP (199 aa). N69 carries N-linked (GlcNAc...) asparagine glycosylation. D96 is a Ca(2+) binding site. Disulfide bonds link C120/C202, C164/C186, and C166/C169. H145 contacts Zn(2+). E146 is an active-site residue. H149 and H155 together coordinate Zn(2+). N-linked (GlcNAc...) asparagine glycosylation is present at N185. The Ca(2+) site is built by C202, N205, V217, N220, L222, E224, E227, and D230. Positions 215–301 constitute a Disintegrin domain; it reads PPVCGNELLE…DCPTDDLQRN (87 aa). 14 cysteine pairs are disulfide-bonded: C218/C247, C229/C242, C231/C237, C241/C264, C255/C261, C260/C286, C273/C293, C280/C312, C305/C317, C324/C374, C339/C385, C352/C362, C369/C411, and C405/C417. The D/ECD-tripeptide motif lies at 279–281; sequence DCD. Ca(2+) contacts are provided by D281, E284, and D296.

This sequence belongs to the venom metalloproteinase (M12B) family. P-III subfamily. P-IIIa sub-subfamily. As to quaternary structure, monomer. The cofactor is Zn(2+). Post-translationally, glycosylated. As to expression, expressed by the venom gland.

The protein localises to the secreted. With respect to regulation, its proteolytic activity is inhibited by EDTA, TPEN, 1,10-phenanthroline, and some thiol compounds, but is enhanced by alkaline earth metal ions (Mg2+, Ca2+, Sr2+, and Ba2+). Its activity is not modulated by urea (4 M). In terms of biological role, non-hemorrhagic metalloproteinase that degrades fibrinogen. The alpha chain (FGA) is rapidly degraded, the beta chain (FGB) is degraded very slowly, while the gamma chain is left intact. Shows a prefential cleavage at X-Leu bonds. Cleaves insulin B chain at '29-His-|-Leu-30', '33-Ser-|-His-34', '38-Ala-|-Leu-39' and '40-Tyr-|-Leu-41' bonds. This Gloydius brevicauda (Korean slamosa snake) protein is Zinc metalloproteinase-disintegrin-like brevilysin H2b.